Consider the following 199-residue polypeptide: Twist-related protein (199 aa).

The interval 1–43 (MQEHQLSRVTSGNKKKYQSFDDESRDEKRMKCDSTDKLESNSN) is disordered. The span at 25–39 (RDEKRMKCDSTDKLE) shows a compositional bias: basic and acidic residues. The region spanning 51 to 102 (THRVIANIRERQRTQALNQSFSTLRKIIPTLPSDKLSKIQTLRLAAMYIDFL) is the bHLH domain.

As to quaternary structure, efficient DNA binding requires dimerization with another bHLH protein. Homodimer. In terms of tissue distribution, expression is seen at the point of medusa formation in the ectodermal and endodermal bud tissues, and in the entocodon which gives rise to all smooth and striated muscle cells. After the subumbrellar plate differentiates from the endoderm, strong expression is detected until the medusa detaches from the gonzoid. Expression is observed in the distal part of the medusa but diminishes in entocodon-derived muscles as the tissues differentiate, with expression disappearing completely after stage 8. In later stages expression is seen in the distal and proximal parts of the bud and depending on state of maturity, in the developing gonadal tissue.

Its subcellular location is the nucleus. Functionally, probable transcription factor, which may be responsible for the formation of myoepithelial cells in early muscle development in larva and the formation of non-muscle tissues in later bud stages and mesoderm-like structures in the medusa. The chain is Twist-related protein from Podocoryna carnea (Hydrozoan).